The primary structure comprises 99 residues: NADH-quinone oxidoreductase subunit K (99 aa).

3 helical membrane passes run Pro-3–Leu-23, Ile-28–Phe-48, and Val-59–Ile-79.

The protein belongs to the complex I subunit 4L family. NDH-1 is composed of 14 different subunits. Subunits NuoA, H, J, K, L, M, N constitute the membrane sector of the complex.

Its subcellular location is the cell membrane. It catalyses the reaction a quinone + NADH + 5 H(+)(in) = a quinol + NAD(+) + 4 H(+)(out). In terms of biological role, NDH-1 shuttles electrons from NADH, via FMN and iron-sulfur (Fe-S) centers, to quinones in the respiratory chain. The immediate electron acceptor for the enzyme in this species is believed to be a menaquinone. Couples the redox reaction to proton translocation (for every two electrons transferred, four hydrogen ions are translocated across the cytoplasmic membrane), and thus conserves the redox energy in a proton gradient. In Mycobacterium sp. (strain JLS), this protein is NADH-quinone oxidoreductase subunit K.